The primary structure comprises 509 residues: Solute carrier family 2, facilitated glucose transporter member 4 (509 aa).

Residues 1–24 (MPSGFQQIGSEDGEPPRQRVTGTL) are Cytoplasmic-facing. Positions 7 to 13 (QIGSEDG) are interaction with SRFBP1. Residue Ser-10 is modified to Phosphoserine. A helical membrane pass occupies residues 25 to 45 (VLAVFSAVLGSLQFGYNIGVI). The Extracellular segment spans residues 46 to 81 (NAPQKVIEQSYNETWLGRQGPEGPGSIPPGTLTTLW). Asn-57 is a glycosylation site (N-linked (GlcNAc...) asparagine). A helical transmembrane segment spans residues 82-102 (ALSVAIFSVGGMISSFLIGII). Residues 103–111 (SQWLGRKRA) lie on the Cytoplasmic side of the membrane. A helical transmembrane segment spans residues 112–132 (MLFNNALAVLGGTLMGLAKAA). Residues 133-142 (ASYEMLILGR) are Extracellular-facing. The helical transmembrane segment at 143–163 (FFIGAYSGLTSGLVPMYVGEI) threads the bilayer. The Cytoplasmic portion of the chain corresponds to 164 to 171 (APTHLRGA). The helical transmembrane segment at 172-192 (LGTLNQLAIVTGILIAQVLGL) threads the bilayer. Residue Gln-177 coordinates D-glucose. Residues 193 to 200 (ESMLGTAT) lie on the Extracellular side of the membrane. The chain crosses the membrane as a helical span at residues 201-221 (LWPLLLGITVLPALLQMVLLP). Over 222-287 (LCPESPRYLY…LLGSHTHRQP (66 aa)) the chain is Cytoplasmic. A lipid anchor (S-palmitoyl cysteine) is attached at Cys-223. The residue at position 274 (Ser-274) is a Phosphoserine; by SGK1. Residues 288-308 (LVIAIVLQLSQQLSGINAVFY) traverse the membrane as a helical segment. D-glucose-binding positions include 298 to 299 (QQ) and Asn-304. At 309 to 323 (YSTSIFESAGVEKPA) the chain is on the extracellular side. The chain crosses the membrane as a helical span at residues 324-344 (YATIGAGVVNTVFTLVSVFLV). Asn-333 is a binding site for D-glucose. The Cytoplasmic segment spans residues 345–353 (ERAGRRTLH). The helical transmembrane segment at 354–374 (LLGLAGMCGCAILMTVALLLL) threads the bilayer. The Extracellular segment spans residues 375–384 (ERVPAMSYVS). A helical transmembrane segment spans residues 385 to 405 (IVAIFGFVAFFEIGPGPIPWF). 2 residues coordinate D-glucose: Glu-396 and Trp-404. The Cytoplasmic portion of the chain corresponds to 406-417 (IVAELFSQGPRP). The helical transmembrane segment at 418-438 (AAMAVAGFSNWTCNFIIGMGF) threads the bilayer. Residues 439–445 (QYVADAM) are Extracellular-facing. A helical transmembrane segment spans residues 446 to 466 (GPYVFLLFAVLLLGFFIFTFL). Residues 467-509 (KVPETRGRTFDQISAVFHRTPSLLEQEVKPSTELEYLGPDEHD) are Cytoplasmic-facing. Phosphothreonine is present on Thr-486. Residue Ser-488 is modified to Phosphoserine. The Dileucine internalization motif signature appears at 489-490 (LL).

This sequence belongs to the major facilitator superfamily. Sugar transporter (TC 2.A.1.1) family. Glucose transporter subfamily. In terms of assembly, binds to DAXX. Interacts via its N-terminus with SRFBP1. Interacts with NDUFA9. Interacts with TRARG1; the interaction is required for proper SLC2A4 recycling after insulin stimulation. In terms of processing, sumoylated. Palmitoylated. Palmitoylation by ZDHHC7 controls the insulin-dependent translocation of GLUT4 to the plasma membrane.

The protein resides in the cell membrane. The protein localises to the endomembrane system. Its subcellular location is the cytoplasm. It is found in the perinuclear region. The catalysed reaction is D-glucose(out) = D-glucose(in). Insulin-regulated facilitative glucose transporter, which plays a key role in removal of glucose from circulation. Response to insulin is regulated by its intracellular localization: in the absence of insulin, it is efficiently retained intracellularly within storage compartments in muscle and fat cells. Upon insulin stimulation, translocates from these compartments to the cell surface where it transports glucose from the extracellular milieu into the cell. This chain is Solute carrier family 2, facilitated glucose transporter member 4, found in Bos taurus (Bovine).